A 23-amino-acid chain; its full sequence is Alyteserin-1b (23 aa).

Asparagine 23 is subject to Asparagine amide.

As to expression, expressed by the skin glands.

It is found in the secreted. The protein resides in the target cell membrane. Its function is as follows. Antibacterial peptide with amphipathic alpha-helical structure. Shows selective growth inhibitory activity against the Gram-negative bacteria E.coli (MIC=25 uM). Has a weak hemolytic activity against human erythrocytes (LC(50)=200 uM). Is not active against S.aureus (MIC=200 uM). The polypeptide is Alyteserin-1b (Alytes obstetricans (Common midwife toad)).